Consider the following 454-residue polypeptide: tRNA modification GTPase MnmE (454 aa).

Arg23, Glu80, and Lys120 together coordinate (6S)-5-formyl-5,6,7,8-tetrahydrofolate. In terms of domain architecture, TrmE-type G spans 216 to 377 (GMKVVIAGRP…LRNHLKQSMG (162 aa)). Asn226 is a binding site for K(+). GTP contacts are provided by residues 226–231 (NAGKSS), 245–251 (TDIAGTT), 270–273 (DTAG), 335–338 (NKAD), and 358–360 (SAR). Ser230 is a binding site for Mg(2+). Residues Thr245, Ile247, and Thr250 each contribute to the K(+) site. Thr251 is a Mg(2+) binding site. Lys454 provides a ligand contact to (6S)-5-formyl-5,6,7,8-tetrahydrofolate.

Belongs to the TRAFAC class TrmE-Era-EngA-EngB-Septin-like GTPase superfamily. TrmE GTPase family. As to quaternary structure, homodimer. Heterotetramer of two MnmE and two MnmG subunits. K(+) is required as a cofactor.

The protein resides in the cytoplasm. Exhibits a very high intrinsic GTPase hydrolysis rate. Involved in the addition of a carboxymethylaminomethyl (cmnm) group at the wobble position (U34) of certain tRNAs, forming tRNA-cmnm(5)s(2)U34. The polypeptide is tRNA modification GTPase MnmE (Salmonella arizonae (strain ATCC BAA-731 / CDC346-86 / RSK2980)).